Reading from the N-terminus, the 258-residue chain is UPF0246 protein CJA_0191 (258 aa).

The protein belongs to the UPF0246 family.

This Cellvibrio japonicus (strain Ueda107) (Pseudomonas fluorescens subsp. cellulosa) protein is UPF0246 protein CJA_0191.